A 485-amino-acid chain; its full sequence is NGFI-A-binding protein 1 (485 aa).

An NCD1 region spans residues 4 to 82 (ALPRTLGELQ…RDWVTNPGLF (79 aa)). Glycyl lysine isopeptide (Lys-Gly) (interchain with G-Cter in SUMO2) cross-links involve residues Lys-126, Lys-129, and Lys-143. Residues 160-187 (WQGHHATESEHSLSPADVGSPASPKESS) form a disordered region. Phosphoserine occurs at positions 171 and 182. Residue Lys-211 forms a Glycyl lysine isopeptide (Lys-Gly) (interchain with G-Cter in SUMO2) linkage. Positions 220–309 (LLKNNKKLAK…ARQVSREVTY (90 aa)) are NCD2. The tract at residues 306–337 (EVTYKYTYRTTRLKCGERDELSPKRIKVEDGF) is necessary for nuclear localization. Residue Ser-327 is modified to Phosphoserine. Lys-332 participates in a covalent cross-link: Glycyl lysine isopeptide (Lys-Gly) (interchain with G-Cter in SUMO1); alternate. Lys-332 participates in a covalent cross-link: Glycyl lysine isopeptide (Lys-Gly) (interchain with G-Cter in SUMO2); alternate. Residues Lys-354, Lys-368, and Lys-372 each participate in a glycyl lysine isopeptide (Lys-Gly) (interchain with G-Cter in SUMO2) cross-link. The tract at residues 398–432 (RQSSGEHSPDGLPSDGSDGQGERPLNLRMPNVQNR) is disordered. At Ser-405 the chain carries Phosphoserine. Glycyl lysine isopeptide (Lys-Gly) (interchain with G-Cter in SUMO2) cross-links involve residues Lys-452, Lys-463, and Lys-475. Lys-478 is covalently cross-linked (Glycyl lysine isopeptide (Lys-Gly) (interchain with G-Cter in SUMO1); alternate). A Glycyl lysine isopeptide (Lys-Gly) (interchain with G-Cter in SUMO2); alternate cross-link involves residue Lys-478.

The protein belongs to the NAB family. Homomultimers may associate with EGR1 bound to DNA.

It localises to the nucleus. Its function is as follows. Acts as a transcriptional repressor for zinc finger transcription factors EGR1 and EGR2. The chain is NGFI-A-binding protein 1 (NAB1) from Mesocricetus auratus (Golden hamster).